We begin with the raw amino-acid sequence, 75 residues long: uncharacterized protein (75 aa).

A helical membrane pass occupies residues 7-26 (ATAPLFVIVGLAVVLTGATG).

The protein resides in the membrane. This is an uncharacterized protein from Dictyostelium discoideum (Social amoeba).